A 139-amino-acid polypeptide reads, in one-letter code: D-ribose pyranase (139 aa).

His-20 (proton donor) is an active-site residue. Substrate-binding positions include Asp-28, His-106, and 128 to 130; that span reads YAN.

It belongs to the RbsD / FucU family. RbsD subfamily. As to quaternary structure, homodecamer.

The protein localises to the cytoplasm. It catalyses the reaction beta-D-ribopyranose = beta-D-ribofuranose. It participates in carbohydrate metabolism; D-ribose degradation; D-ribose 5-phosphate from beta-D-ribopyranose: step 1/2. Catalyzes the interconversion of beta-pyran and beta-furan forms of D-ribose. This Photorhabdus laumondii subsp. laumondii (strain DSM 15139 / CIP 105565 / TT01) (Photorhabdus luminescens subsp. laumondii) protein is D-ribose pyranase.